A 186-amino-acid polypeptide reads, in one-letter code: MTDPKETINIENVVASTGIGQELDLQSVAMDLEGADYDPEQFPGLVYRTQDPKSAALIFRSGKIVCTGAKSTDDVHESLRIVFDKLRELSIKVEDDPEIVVQNIVTSADLGRQLNLNAIAIGLGLENIEYEPEQFPGLVYRLDDPEVVALLFGSGKLVITGGKEPKDAEHAVDKITSRLEELGLLD.

A run of 2 repeats spans residues 10–86 (IENV…FDKL) and 101–179 (VQNI…TSRL).

This sequence belongs to the TBP family.

General factor that plays a role in the activation of archaeal genes transcribed by RNA polymerase. Binds specifically to the TATA box promoter element which lies close to the position of transcription initiation. This Halobacterium salinarum (strain ATCC 700922 / JCM 11081 / NRC-1) (Halobacterium halobium) protein is TATA-box-binding protein E (tbpE).